The primary structure comprises 399 residues: Probable 2-isopropylmalate synthase (399 aa).

Positions valine 20 to tyrosine 272 constitute a Pyruvate carboxyltransferase domain. A divalent metal cation contacts are provided by aspartate 29, histidine 210, histidine 212, and asparagine 246.

The protein belongs to the alpha-IPM synthase/homocitrate synthase family. In terms of assembly, homodimer. The cofactor is a divalent metal cation.

The catalysed reaction is 3-methyl-2-oxobutanoate + acetyl-CoA + H2O = (2S)-2-isopropylmalate + CoA + H(+). It functions in the pathway amino-acid biosynthesis; L-leucine biosynthesis; L-leucine from 3-methyl-2-oxobutanoate: step 1/4. Functionally, catalyzes the condensation of the acetyl group of acetyl-CoA with 3-methyl-2-oxobutanoate (2-oxoisovalerate) to form 3-carboxy-3-hydroxy-4-methylpentanoate (2-isopropylmalate). The sequence is that of Probable 2-isopropylmalate synthase (leuA) from Ignicoccus hospitalis (strain KIN4/I / DSM 18386 / JCM 14125).